Consider the following 495-residue polypeptide: Cobyric acid synthase (495 aa).

One can recognise a GATase cobBQ-type domain in the interval 258–427 (GLRVAAVRLP…WHGLFDNDGF (170 aa)). C339 serves as the catalytic Nucleophile. H419 is an active-site residue.

Belongs to the CobB/CobQ family. CobQ subfamily.

Its pathway is cofactor biosynthesis; adenosylcobalamin biosynthesis. Its function is as follows. Catalyzes amidations at positions B, D, E, and G on adenosylcobyrinic A,C-diamide. NH(2) groups are provided by glutamine, and one molecule of ATP is hydrogenolyzed for each amidation. The polypeptide is Cobyric acid synthase (Mycobacterium sp. (strain KMS)).